The primary structure comprises 365 residues: Putative carbonic anhydrase-like protein 1 (365 aa).

The signal sequence occupies residues 1 to 25 (MRFECSHFPLFLIILTCHISPLKSS). The Alpha-carbonic anhydrase domain maps to 28–356 (YQWSYDSDVF…TNNRLVRTNI (329 aa)). Tyr223 is a catalytic residue. Substrate contacts are provided by residues Thr295 and 295–296 (TS).

It belongs to the alpha-carbonic anhydrase family.

It localises to the secreted. The sequence is that of Putative carbonic anhydrase-like protein 1 (cah-1) from Caenorhabditis elegans.